Consider the following 132-residue polypeptide: Fatty acid-binding protein 12 (132 aa).

Residues R107 and 127–129 (RTY) contribute to the a fatty acid site.

Belongs to the calycin superfamily. Fatty-acid binding protein (FABP) family. In terms of tissue distribution, highly expressed in adult retina and testis with lower levels in cerebral cortex, kidney and epididymis. In the retina, strongly expressed in the ganglion cell layer and throughout the inner nuclear layer in amacrine and bipolar cells. Not expressed in the outer nuclear layer. In the testis, detected in the seminiferous tubules.

In terms of biological role, may play a role in lipid transport. The sequence is that of Fatty acid-binding protein 12 from Rattus norvegicus (Rat).